A 313-amino-acid polypeptide reads, in one-letter code: Homoserine O-acetyltransferase (313 aa).

Cysteine 142 (acyl-thioester intermediate) is an active-site residue. Substrate-binding residues include lysine 163 and serine 191. Catalysis depends on histidine 234, which acts as the Proton acceptor. Glutamate 236 is a catalytic residue. Arginine 248 provides a ligand contact to substrate.

It belongs to the MetA family.

It localises to the cytoplasm. The enzyme catalyses L-homoserine + acetyl-CoA = O-acetyl-L-homoserine + CoA. It functions in the pathway amino-acid biosynthesis; L-methionine biosynthesis via de novo pathway; O-acetyl-L-homoserine from L-homoserine: step 1/1. Its function is as follows. Transfers an acetyl group from acetyl-CoA to L-homoserine, forming acetyl-L-homoserine. This chain is Homoserine O-acetyltransferase, found in Streptococcus gordonii (strain Challis / ATCC 35105 / BCRC 15272 / CH1 / DL1 / V288).